The sequence spans 881 residues: Alanine--tRNA ligase (881 aa).

The Zn(2+) site is built by histidine 564, histidine 568, cysteine 666, and histidine 670.

It belongs to the class-II aminoacyl-tRNA synthetase family. The cofactor is Zn(2+).

The protein localises to the cytoplasm. It catalyses the reaction tRNA(Ala) + L-alanine + ATP = L-alanyl-tRNA(Ala) + AMP + diphosphate. Functionally, catalyzes the attachment of alanine to tRNA(Ala) in a two-step reaction: alanine is first activated by ATP to form Ala-AMP and then transferred to the acceptor end of tRNA(Ala). Also edits incorrectly charged Ser-tRNA(Ala) and Gly-tRNA(Ala) via its editing domain. This chain is Alanine--tRNA ligase, found in Caldicellulosiruptor saccharolyticus (strain ATCC 43494 / DSM 8903 / Tp8T 6331).